The primary structure comprises 229 residues: 7-cyano-7-deazaguanine synthase (229 aa).

9 to 19 (LSGGLDSATVL) serves as a coordination point for ATP. Zn(2+) is bound by residues Cys188, Cys198, Cys201, and Cys204.

The protein belongs to the QueC family. Zn(2+) is required as a cofactor.

It catalyses the reaction 7-carboxy-7-deazaguanine + NH4(+) + ATP = 7-cyano-7-deazaguanine + ADP + phosphate + H2O + H(+). Its pathway is purine metabolism; 7-cyano-7-deazaguanine biosynthesis. In terms of biological role, catalyzes the ATP-dependent conversion of 7-carboxy-7-deazaguanine (CDG) to 7-cyano-7-deazaguanine (preQ(0)). This chain is 7-cyano-7-deazaguanine synthase, found in Methylobacillus flagellatus (strain ATCC 51484 / DSM 6875 / VKM B-1610 / KT).